The sequence spans 693 residues: Polyribonucleotide nucleotidyltransferase (693 aa).

Asp489 and Asp495 together coordinate Mg(2+). In terms of domain architecture, KH spans 556–615 (PQIHVMNINPAKIKDVVGRGGATVKGIVEKTGAQIDTSDSGEVKVFAKDKKSMDMAVAMI). An S1 motif domain is found at 625 to 693 (GQVYKGKIVK…GRVKLSLVAR (69 aa)).

The protein belongs to the polyribonucleotide nucleotidyltransferase family. Component of the RNA degradosome, which is a multiprotein complex involved in RNA processing and mRNA degradation. Mg(2+) is required as a cofactor.

It localises to the cytoplasm. The enzyme catalyses RNA(n+1) + phosphate = RNA(n) + a ribonucleoside 5'-diphosphate. Functionally, involved in mRNA degradation. Catalyzes the phosphorolysis of single-stranded polyribonucleotides processively in the 3'- to 5'-direction. The sequence is that of Polyribonucleotide nucleotidyltransferase from Francisella tularensis subsp. holarctica (strain OSU18).